The sequence spans 430 residues: MFVDQVKISLKAGDGGNGITAYRREKYVPFGGPAGGDGGKGASVVFEVDEGLRTLLDFRYQRHFKAKKGENGQSSNMHGRNAEDLVLKVPPGTIIKSVESEEVLADLVEDGQRAIVARGGRGGRGNSRFATPRNPAPDFSENGEPGEELEVTLELKLLADVGLVGFPSVGKSTLLSIVSKAKPKIGAYHFTTIKPNLGVVSTPDHRSFVMADLPGLIEGASDGVGLGHQFLRHVERTKVIVHMIDMSGSEGRNPLDDYKIINQELINYKQRLEDRPQIIVANKMDLPDSQGNLSHFKEQLDNDVTVVPVSTITRDNIDQLLYQIADKLEEVKDVDFSVEEDENLGVNRVLYKHTPSADKFTISRDDDGAYVVSGNAIERMFKMTDFNSDPAVRRFARQMRSMGIDDALRERGCSNGDIVRILGGEFEFVE.

The Obg domain maps to 1–158 (MFVDQVKISL…LEVTLELKLL (158 aa)). The disordered stretch occupies residues 118-145 (RGGRGGRGNSRFATPRNPAPDFSENGEP). Residues 159–329 (ADVGLVGFPS…LLYQIADKLE (171 aa)) enclose the OBG-type G domain. GTP contacts are provided by residues 165–172 (GFPSVGKS), 190–194 (FTTIK), 212–215 (DLPG), 282–285 (NKMD), and 310–312 (STI). Mg(2+) is bound by residues S172 and T192. The region spanning 352 to 430 (KHTPSADKFT…ILGGEFEFVE (79 aa)) is the OCT domain.

This sequence belongs to the TRAFAC class OBG-HflX-like GTPase superfamily. OBG GTPase family. Monomer. Requires Mg(2+) as cofactor.

Its subcellular location is the cytoplasm. In terms of biological role, an essential GTPase which binds GTP, GDP and possibly (p)ppGpp with moderate affinity, with high nucleotide exchange rates and a fairly low GTP hydrolysis rate. Plays a role in control of the cell cycle, stress response, ribosome biogenesis and in those bacteria that undergo differentiation, in morphogenesis control. This Staphylococcus epidermidis (strain ATCC 12228 / FDA PCI 1200) protein is GTPase Obg.